Consider the following 104-residue polypeptide: Co-chaperonin GroES 5 (104 aa).

Belongs to the GroES chaperonin family. In terms of assembly, heptamer of 7 subunits arranged in a ring. Interacts with the chaperonin GroEL.

Its subcellular location is the cytoplasm. Its function is as follows. Together with the chaperonin GroEL, plays an essential role in assisting protein folding. The GroEL-GroES system forms a nano-cage that allows encapsulation of the non-native substrate proteins and provides a physical environment optimized to promote and accelerate protein folding. GroES binds to the apical surface of the GroEL ring, thereby capping the opening of the GroEL channel. This chain is Co-chaperonin GroES 5, found in Rhizobium meliloti (strain 1021) (Ensifer meliloti).